The chain runs to 101 residues: Toxin Tpa8 (101 aa).

Positions 1–20 (MVKSEMKLVIFSLFLLLIGV) are cleaved as a signal peptide. Residues 24–98 (KNGYPVIEGG…VMDRTKEYCE (75 aa)) form the LCN-type CS-alpha/beta domain. Intrachain disulfides connect cysteine 44–cysteine 70, cysteine 56–cysteine 75, cysteine 60–cysteine 77, and cysteine 71–cysteine 97.

The protein belongs to the long (4 C-C) scorpion toxin superfamily. Sodium channel inhibitor family. Beta subfamily. As to expression, expressed by the venom gland.

The protein localises to the secreted. Its function is as follows. Excitatory insect beta-toxins induce a spastic paralysis. They bind voltage-independently at site-4 of sodium channels (Nav) and shift the voltage of activation toward more negative potentials thereby affecting sodium channel activation and promoting spontaneous and repetitive firing. This Tityus pachyurus (Colombian scorpion) protein is Toxin Tpa8.